A 439-amino-acid chain; its full sequence is Chitinase-like protein Idgf1 (439 aa).

The N-terminal stretch at 1-20 (MRFQLFYILGLLSVTSLTQA) is a signal peptide. Positions 22-439 (NNLVCYYDST…IVRSIKYFMG (418 aa)) constitute a GH18 domain. The cysteines at positions 26 and 53 are disulfide-linked. Asn-122, Asn-218, and Asn-346 each carry an N-linked (GlcNAc...) asparagine glycan. Cys-340 and Cys-423 are joined by a disulfide.

It belongs to the glycosyl hydrolase 18 family. IDGF subfamily. Post-translationally, glycosylated.

The protein resides in the secreted. Cooperates with insulin-like peptides to stimulate the proliferation, polarization and motility of imaginal disk cells. May act by stabilizing the binding of insulin-like peptides to its receptor through a simultaneous interaction with both molecules to form a multiprotein signaling complex. This Drosophila simulans (Fruit fly) protein is Chitinase-like protein Idgf1 (Idgf1).